We begin with the raw amino-acid sequence, 577 residues long: Pyruvate decarboxylase (577 aa).

Positions 30 and 116 each coordinate substrate. Positions 388–482 (TPGYGVNDFI…FLINNDGYTI (95 aa)) are thiamine pyrophosphate binding. D450, N477, and G479 together coordinate Mg(2+). E483 lines the substrate pocket.

This sequence belongs to the TPP enzyme family. Homotetramer. A metal cation serves as cofactor. The cofactor is thiamine diphosphate.

The enzyme catalyses a 2-oxocarboxylate + H(+) = an aldehyde + CO2. The protein is Pyruvate decarboxylase (pdcA) of Aspergillus parasiticus.